Reading from the N-terminus, the 400-residue chain is MAVIFVLFFLVSMALSARIRPSFNGTALSGTSNKHPFEPGPNTIFREEVPPSAAASGFPSAHGTELRTHDPSIIKVGSIYYSYSVGPSITIHQAFSLDGPWTEVGALLSGESVIKKGDRKAPWAANTIYINGRYYCYYSVSNSGCRDSAIGVASSAFPGPGEWTDHGLIIQSGTGEGSDVFPLNQSNTIDPNVFVDGDGTAYLNFGSFWTGLWQVPLEEELVTVKGLQDGTLDAVHLAAEPGKVWRSKLANSKAKTVSTSKTGSPICGDPTGGHPIEGGFMAYHAPYYYMWFSWGRCCEFKDPAMRSNGKEYRIRVGRSTSARGPFVDKQGIDLVDGGGETVYGSNGDVFAPGGQGILTDEFGDILYYHYLNSSVSYDFADARLGYNRLEYVDGWPVAVY.

Residues 1–16 form the signal peptide; sequence MAVIFVLFFLVSMALS. A glycan (N-linked (GlcNAc...) asparagine) is linked at N24. D70 functions as the Proton acceptor in the catalytic mechanism. An N-linked (GlcNAc...) asparagine glycan is attached at N184. Catalysis depends on E277, which acts as the Proton donor. A glycan (N-linked (GlcNAc...) asparagine) is linked at N372.

It belongs to the glycosyl hydrolase 43 family.

It is found in the secreted. The catalysed reaction is Endohydrolysis of (1-&gt;5)-alpha-arabinofuranosidic linkages in (1-&gt;5)-arabinans.. The protein operates within glycan metabolism; L-arabinan degradation. In terms of biological role, endo-1,5-alpha-L-arabinanase involved in degradation of pectin. Its preferred substrate is linear 1,5-alpha-L-arabinan. The polypeptide is Arabinan endo-1,5-alpha-L-arabinosidase B (abnB) (Emericella nidulans (strain FGSC A4 / ATCC 38163 / CBS 112.46 / NRRL 194 / M139) (Aspergillus nidulans)).